A 294-amino-acid chain; its full sequence is Probable enoyl-CoA hydratase 2 (294 aa).

(3R)-3-hydroxydecanoyl-CoA is bound by residues 84–85 (HG), lysine 113, 190–195 (DLNPLH), glycine 213, and phenylalanine 243. A MaoC-like domain is found at 165-269 (DRAPDAISKQ…INPTTILFQS (105 aa)). Residues 292–294 (GSL) carry the Microbody targeting signal motif.

Belongs to the short-chain dehydrogenases/reductases (SDR) family.

The protein localises to the peroxisome. The catalysed reaction is a (3R)-3-hydroxyacyl-CoA = a (2E)-enoyl-CoA + H2O. This is Probable enoyl-CoA hydratase 2 (mfeB) from Dictyostelium discoideum (Social amoeba).